Reading from the N-terminus, the 238-residue chain is Probable xyloglucan-specific endo-beta-1,4-glucanase A (238 aa).

Residues Met1–Ala18 form the signal peptide. 2 N-linked (GlcNAc...) asparagine glycosylation sites follow: Asn106 and Asn171.

The protein belongs to the glycosyl hydrolase 12 (cellulase H) family.

The protein localises to the secreted. The enzyme catalyses xyloglucan + H2O = xyloglucan oligosaccharides.. Catalyzes endohydrolysis of 1,4-beta-D-glucosidic linkages in xyloglucan with retention of the beta-configuration of the glycosyl residues. Specific for xyloglucan and does not hydrolyze other cell wall components. The protein is Probable xyloglucan-specific endo-beta-1,4-glucanase A (xgeA) of Aspergillus fumigatus (strain CBS 144.89 / FGSC A1163 / CEA10) (Neosartorya fumigata).